The chain runs to 885 residues: DNA-directed RNA polymerase subunit Rpo1N (885 aa).

8 residues coordinate Zn(2+): C60, C63, C70, H73, C100, C103, C150, and C153. Residues D464, D466, and D468 each contribute to the Mg(2+) site.

The protein belongs to the RNA polymerase beta' chain family. As to quaternary structure, part of the RNA polymerase complex. It depends on Mg(2+) as a cofactor. The cofactor is Zn(2+).

It localises to the cytoplasm. The enzyme catalyses RNA(n) + a ribonucleoside 5'-triphosphate = RNA(n+1) + diphosphate. DNA-dependent RNA polymerase (RNAP) catalyzes the transcription of DNA into RNA using the four ribonucleoside triphosphates as substrates. Forms the clamp head domain. This chain is DNA-directed RNA polymerase subunit Rpo1N, found in Thermoplasma acidophilum (strain ATCC 25905 / DSM 1728 / JCM 9062 / NBRC 15155 / AMRC-C165).